A 328-amino-acid chain; its full sequence is Phosphate acyltransferase (328 aa).

Belongs to the PlsX family. In terms of assembly, homodimer. Probably interacts with PlsY.

It localises to the cytoplasm. It carries out the reaction a fatty acyl-[ACP] + phosphate = an acyl phosphate + holo-[ACP]. The protein operates within lipid metabolism; phospholipid metabolism. Catalyzes the reversible formation of acyl-phosphate (acyl-PO(4)) from acyl-[acyl-carrier-protein] (acyl-ACP). This enzyme utilizes acyl-ACP as fatty acyl donor, but not acyl-CoA. The protein is Phosphate acyltransferase of Campylobacter jejuni (strain RM1221).